Consider the following 161-residue polypeptide: Nucleotide-binding protein amb3630 (161 aa).

The protein belongs to the YajQ family.

In terms of biological role, nucleotide-binding protein. This Paramagnetospirillum magneticum (strain ATCC 700264 / AMB-1) (Magnetospirillum magneticum) protein is Nucleotide-binding protein amb3630.